The following is a 423-amino-acid chain: 4-hydroxy-3-methylbut-2-en-1-yl diphosphate synthase (flavodoxin) (423 aa).

Positions 307, 310, 353, and 360 each coordinate [4Fe-4S] cluster.

This sequence belongs to the IspG family. [4Fe-4S] cluster is required as a cofactor.

It catalyses the reaction (2E)-4-hydroxy-3-methylbut-2-enyl diphosphate + oxidized [flavodoxin] + H2O + 2 H(+) = 2-C-methyl-D-erythritol 2,4-cyclic diphosphate + reduced [flavodoxin]. It participates in isoprenoid biosynthesis; isopentenyl diphosphate biosynthesis via DXP pathway; isopentenyl diphosphate from 1-deoxy-D-xylulose 5-phosphate: step 5/6. In terms of biological role, converts 2C-methyl-D-erythritol 2,4-cyclodiphosphate (ME-2,4cPP) into 1-hydroxy-2-methyl-2-(E)-butenyl 4-diphosphate. The protein is 4-hydroxy-3-methylbut-2-en-1-yl diphosphate synthase (flavodoxin) of Brucella anthropi (strain ATCC 49188 / DSM 6882 / CCUG 24695 / JCM 21032 / LMG 3331 / NBRC 15819 / NCTC 12168 / Alc 37) (Ochrobactrum anthropi).